A 151-amino-acid chain; its full sequence is Small ribosomal subunit protein uS9 (151 aa).

It belongs to the universal ribosomal protein uS9 family.

The chain is Small ribosomal subunit protein uS9 (RpS16) from Spodoptera frugiperda (Fall armyworm).